The primary structure comprises 1197 residues: Sensor protein EvgS (1197 aa).

The signal sequence occupies residues 1-21; that stretch reads MKFLPYIFLLCCGLWSTISFA. Residues 22–325 lie on the Cytoplasmic side of the membrane; sequence DEDYIEYRGI…SMTDENGSVR (304 aa). A helical membrane pass occupies residues 326–346; that stretch reads GVMGDILNIITLQTGLNFSPI. The Periplasmic segment spans residues 347–537; it reads TVSHNIHAGT…TWDLYSEQFY (191 aa). A helical membrane pass occupies residues 538–558; the sequence is IVTTLSVLLVGSSLLWGFYLL. The Cytoplasmic portion of the chain corresponds to 559–1197; the sequence is RSVRRRKVIQ…EIAVFCQQNN (639 aa). Residues 718-938 enclose the Histidine kinase domain; sequence TMSHEIRTPI…TFTITIPVEI (221 aa). H721 bears the Phosphohistidine; by autocatalysis mark. The region spanning 960 to 1074 is the Response regulatory domain; sequence SILIADDHPT…VLKTHLSQLH (115 aa). D1009 is subject to 4-aspartylphosphate. The HPt domain occupies 1098-1197; the sequence is DLQLMQEILM…EIAVFCQQNN (100 aa). Position 1137 is a phosphohistidine (H1137).

Activation requires a sequential transfer of a phosphate group from a His in the primary transmitter domain, to an Asp in the receiver domain and to a His in the secondary transmitter domain.

The protein localises to the cell inner membrane. It carries out the reaction ATP + protein L-histidine = ADP + protein N-phospho-L-histidine.. Member of the two-component regulatory system EvgS/EvgA. Phosphorylates EvgA via a four-step phosphorelay in response to environmental signals. This Escherichia coli O157:H7 protein is Sensor protein EvgS (evgS).